The chain runs to 189 residues: MNLSATLILAFGMSMDAFAASIGKGASLHQPRFREALRTGLIFGVVEAITPIIGWGIGLFASQYIMEWDHWVAFSLLFILGMRMIVEGVRNRPDEVEKVKRHGFWLLVATAIATSLDAMAIGVGLAFLQVNIVHTAMAIGCATMIMATLGMMIGRFIGPLLGKRAEILGGVVLIGIGVNILLEHLGYLA.

Transmembrane regions (helical) follow at residues 3-23, 41-61, 65-85, 103-123, 132-152, and 167-187; these read LSAT…ASIG, LIFG…GLFA, IMEW…MRMI, GFWL…AIGV, IVHT…LGMM, and ILGG…HLGY.

The protein belongs to the MntP (TC 9.B.29) family.

The protein localises to the cell inner membrane. Functionally, probably functions as a manganese efflux pump. This chain is Putative manganese efflux pump MntP, found in Serratia proteamaculans (strain 568).